Consider the following 242-residue polypeptide: DNA-directed RNA polymerase III subunit rpc5 (242 aa).

Disordered regions lie at residues 1-22 (MSFS…TEEQ) and 153-172 (LKAA…PRGP). Residues 155–172 (AAAGPSNSSSGTSTPRGP) show a composition bias toward low complexity.

In terms of assembly, component of the RNA polymerase III (Pol III) complex consisting of 17 subunits.

Its subcellular location is the cytoplasm. The protein resides in the nucleus. DNA-dependent RNA polymerase catalyzes the transcription of DNA into RNA using the four ribonucleoside triphosphates as substrates. Specific peripheric component of RNA polymerase III which synthesizes small RNAs, such as 5S rRNA and tRNAs. The RPC53/RPC4-RPC37/RPC5 subcomplex is required for terminator recognition and reinitiation. This is DNA-directed RNA polymerase III subunit rpc5 (rpc37) from Schizosaccharomyces pombe (strain 972 / ATCC 24843) (Fission yeast).